The chain runs to 1295 residues: Serine protease pet autotransporter (1295 aa).

Positions Met-1–Ala-52 are cleaved as a signal peptide. Positions Asn-54–Glu-304 constitute a Peptidase S6 domain. Active-site charge relay system residues include His-124, Asp-153, and Ser-260. In terms of domain architecture, Autotransporter spans Asp-1029–Phe-1295.

Post-translationally, cleaved to release the mature protein from the outer membrane.

The protein resides in the periplasm. Its subcellular location is the secreted. It localises to the cell surface. The protein localises to the cell outer membrane. Its activity is regulated as follows. Inhibition of cytotoxic activity by phenylmethylsulfonyl fluoride. In terms of biological role, serine protease with enterotoxic and cytotoxic activity. Internalization into the host cell is required for the induction of cytopathic effects. However, the serine activity is not necessary for secretion and internalization into the host cell. The chain is Serine protease pet autotransporter (pet) from Escherichia coli O44:H18 (strain 042 / EAEC).